Consider the following 258-residue polypeptide: Regulatory protein RecX (258 aa).

The protein belongs to the RecX family.

The protein localises to the cytoplasm. Modulates RecA activity. This is Regulatory protein RecX from Streptococcus pyogenes serotype M12 (strain MGAS2096).